The following is a 644-amino-acid chain: 1-deoxy-D-xylulose-5-phosphate synthase (644 aa).

Thiamine diphosphate contacts are provided by residues His84 and 125 to 127; that span reads GHS. Asp156 contacts Mg(2+). Residues 157-158, Asn185, Tyr296, and Glu378 each bind thiamine diphosphate; that span reads GA. Asn185 is a binding site for Mg(2+).

This sequence belongs to the transketolase family. DXPS subfamily. As to quaternary structure, homodimer. It depends on Mg(2+) as a cofactor. Thiamine diphosphate is required as a cofactor.

The enzyme catalyses D-glyceraldehyde 3-phosphate + pyruvate + H(+) = 1-deoxy-D-xylulose 5-phosphate + CO2. It participates in metabolic intermediate biosynthesis; 1-deoxy-D-xylulose 5-phosphate biosynthesis; 1-deoxy-D-xylulose 5-phosphate from D-glyceraldehyde 3-phosphate and pyruvate: step 1/1. Functionally, catalyzes the acyloin condensation reaction between C atoms 2 and 3 of pyruvate and glyceraldehyde 3-phosphate to yield 1-deoxy-D-xylulose-5-phosphate (DXP). The polypeptide is 1-deoxy-D-xylulose-5-phosphate synthase (Paramagnetospirillum magneticum (strain ATCC 700264 / AMB-1) (Magnetospirillum magneticum)).